We begin with the raw amino-acid sequence, 1020 residues long: Calcium-transporting ATPase sarcoplasmic/endoplasmic reticulum type (1020 aa).

Topologically, residues 1–48 are cytoplasmic; sequence MEDGHSKTVEQSLNFFGTDPERGLTLDQIKANQKKYGPNELPTEEGKS. Residues 49–69 traverse the membrane as a helical segment; the sequence is IWQLVLEQFDDLLVKILLLAA. Topologically, residues 70–89 are lumenal; it reads IISFVLALFEEHEETFTAFV. The helical transmembrane segment at 90 to 110 threads the bilayer; sequence EPLVILLILIANAVVGVWQER. Over 111-253 the chain is Cytoplasmic; that stretch reads NAESAIEALK…EIKTPLQQKL (143 aa). Phosphoserine is present on S240. Residues 254–273 traverse the membrane as a helical segment; that stretch reads DEFGEQLSKVISVICVAVWA. Residues 274 to 295 lie on the Lumenal side of the membrane; the sequence is INIGHFNDPAHGGSWIKGAIYY. The helical transmembrane segment at 296–313 threads the bilayer; the sequence is FKIAVALAVAAIPEGLPA. 4 residues coordinate Ca(2+): V304, A305, I307, and E309. Residues 314–757 lie on the Cytoplasmic side of the membrane; it reads VITTCLALGT…EEGRAIYNNM (444 aa). D351 (4-aspartylphosphate intermediate) is an active-site residue. 2 residues coordinate Mg(2+): D703 and D707. Residues 758-777 form a helical membrane-spanning segment; it reads KQFIRYLISSNIGEVVSIFL. Ca(2+)-binding residues include N768 and E771. Over 778–787 the chain is Lumenal; sequence TAALGLPEAL. Residues 788–808 form a helical membrane-spanning segment; the sequence is IPVQLLWVNLVTDGLPATALG. N796, T799, and D800 together coordinate Ca(2+). Residues 809–828 lie on the Cytoplasmic side of the membrane; the sequence is FNPPDLDIMEKPPRKADEGL. The helical transmembrane segment at 829-851 threads the bilayer; sequence ISGWLFFRYMAIGFYVGAATVGA. Over 852–897 the chain is Lumenal; that stretch reads AAWWFVFSDEGPKLSYWQLTHHLSCLGGGDEFKGVDCKIFSDPHAM. A helical transmembrane segment spans residues 898–917; that stretch reads TMALSVLVTIEMLNAMNSLS. E908 is a binding site for Ca(2+). Residues 918 to 930 lie on the Cytoplasmic side of the membrane; that stretch reads ENQSLITMPPWCN. Residues 931–949 form a helical membrane-spanning segment; the sequence is LWLIGSMALSFTLHFVILY. Residues 950-964 are Lumenal-facing; it reads VDVLSTVFQVTPLSA. The chain crosses the membrane as a helical span at residues 965 to 985; sequence EEWITVMKFSIPVVLLDETLK. Topologically, residues 986 to 1020 are cytoplasmic; sequence FVARKIADGESPIYKMHGIVLMWAVFFGLLYAMML.

This sequence belongs to the cation transport ATPase (P-type) (TC 3.A.3) family. Interacts with SclA and SclB.

It is found in the endoplasmic reticulum membrane. Its subcellular location is the sarcoplasmic reticulum membrane. The enzyme catalyses Ca(2+)(in) + ATP + H2O = Ca(2+)(out) + ADP + phosphate + H(+). Its function is as follows. This magnesium-dependent enzyme catalyzes the hydrolysis of ATP coupled with the transport of calcium. This chain is Calcium-transporting ATPase sarcoplasmic/endoplasmic reticulum type, found in Drosophila melanogaster (Fruit fly).